A 30-amino-acid chain; its full sequence is Agglutinin alpha-1 chain (30 aa).

The Jacalin-type lectin domain occupies 1 to 30 (GVAFDDGSYTGIREINFEYNRETAIGGXQV).

This sequence belongs to the jacalin lectin family. In terms of assembly, tetramer of four alpha chains associated with two or four beta chains.

N-acetyl-galactosamine and D-galactose specific lectin. Binds the Tn-antigen structure GalNAc-alpha-1-O-Ser, the T-antigen structure Gal-beta1-3-GalNAc and IgA. The sequence is that of Agglutinin alpha-1 chain from Morus nigra (Black mulberry).